Here is a 644-residue protein sequence, read N- to C-terminus: Chaperone protein DnaK (644 aa).

At Thr-200 the chain carries Phosphothreonine; by autocatalysis. The segment at 603-644 is disordered; it reads VMAAEQAKSGGAAPGAAPGGAQQAAPDADVVDADFKEVDDKK. Positions 612-630 are enriched in low complexity; that stretch reads GGAAPGAAPGGAQQAAPDA. Basic and acidic residues predominate over residues 635–644; sequence ADFKEVDDKK.

This sequence belongs to the heat shock protein 70 family.

Acts as a chaperone. The protein is Chaperone protein DnaK of Polynucleobacter asymbioticus (strain DSM 18221 / CIP 109841 / QLW-P1DMWA-1) (Polynucleobacter necessarius subsp. asymbioticus).